The sequence spans 359 residues: Protein disulfide-isomerase tigA (359 aa).

An N-terminal signal peptide occupies residues 1-19 (MVRLSNLVSCLGLASAVTA). Thioredoxin domains lie at 20-129 (AVVD…EKTG) and 131-250 (KPRG…EKTG). Catalysis depends on nucleophile residues cysteine 49, cysteine 52, cysteine 169, and cysteine 172. Disulfide bonds link cysteine 49–cysteine 52 and cysteine 169–cysteine 172. Residues 356–359 (KDEL) carry the Prevents secretion from ER motif.

It belongs to the protein disulfide isomerase family.

The protein localises to the endoplasmic reticulum lumen. It carries out the reaction Catalyzes the rearrangement of -S-S- bonds in proteins.. The chain is Protein disulfide-isomerase tigA (tigA) from Aspergillus niger.